We begin with the raw amino-acid sequence, 312 residues long: tRNA-cytidine(32) 2-sulfurtransferase (312 aa).

A PP-loop motif motif is present at residues 39-44 (SGGKDS). [4Fe-4S] cluster is bound by residues Cys-114, Cys-117, and Cys-205.

Belongs to the TtcA family. In terms of assembly, homodimer. Mg(2+) is required as a cofactor. Requires [4Fe-4S] cluster as cofactor.

Its subcellular location is the cytoplasm. It carries out the reaction cytidine(32) in tRNA + S-sulfanyl-L-cysteinyl-[cysteine desulfurase] + AH2 + ATP = 2-thiocytidine(32) in tRNA + L-cysteinyl-[cysteine desulfurase] + A + AMP + diphosphate + H(+). The protein operates within tRNA modification. Its function is as follows. Catalyzes the ATP-dependent 2-thiolation of cytidine in position 32 of tRNA, to form 2-thiocytidine (s(2)C32). The sulfur atoms are provided by the cysteine/cysteine desulfurase (IscS) system. This is tRNA-cytidine(32) 2-sulfurtransferase from Cupriavidus pinatubonensis (strain JMP 134 / LMG 1197) (Cupriavidus necator (strain JMP 134)).